The sequence spans 1402 residues: Transcription factor SPT20 homolog (1402 aa).

Disordered stretches follow at residues 1–29 (MNGN…EQEQ), 60–107 (VNSL…LDTD), 114–133 (NNDS…SSSS), 177–206 (QTTL…NNIL), 786–817 (APST…PTPV), 1136–1174 (PQQI…QYQT), and 1199–1250 (QPLQ…PPQI). The span at 7–29 (VHTEENKNEHQQEGKGGEQEQEQ) shows a compositional bias: basic and acidic residues. Over residues 60–72 (VNSLSEPTPNEQQ) the composition is skewed to polar residues. The span at 73 to 102 (NNNNNNNSNGNGNGNDETTSSKTTTIINSN) shows a compositional bias: low complexity. Low complexity-rich tracts occupy residues 183–204 (NNNN…NNNN), 786–812 (APST…TTPT), 1136–1150 (PQQI…PPNQ), 1157–1174 (SPQS…QYQT), 1199–1218 (QPLQ…QQQQ), and 1226–1250 (PQQF…PPQI).

Belongs to the SPT20 family.

The polypeptide is Transcription factor SPT20 homolog (Dictyostelium discoideum (Social amoeba)).